A 51-amino-acid polypeptide reads, in one-letter code: Proteinase inhibitor PTI (51 aa).

4 disulfides stabilise this stretch: Cys-3-Cys-40, Cys-6-Cys-24, Cys-7-Cys-36, and Cys-13-Cys-49.

The protein belongs to the protease inhibitor I20 (potato type II proteinase inhibitor) family.

The protein resides in the secreted. The sequence is that of Proteinase inhibitor PTI from Solanum tuberosum (Potato).